The following is a 957-amino-acid chain: Leucine--tRNA ligase (957 aa).

The short motif at 66-77 (PYPSGAGLHVGH) is the 'HIGH' region element. A 'KMSKS' region motif is present at residues 728–732 (KMGKS). An ATP-binding site is contributed by Lys731.

Belongs to the class-I aminoacyl-tRNA synthetase family.

It is found in the cytoplasm. It catalyses the reaction tRNA(Leu) + L-leucine + ATP = L-leucyl-tRNA(Leu) + AMP + diphosphate. This is Leucine--tRNA ligase from Streptomyces griseus subsp. griseus (strain JCM 4626 / CBS 651.72 / NBRC 13350 / KCC S-0626 / ISP 5235).